The chain runs to 234 residues: MNQSYFPHHQSDLSLQRVEAALDALRAGQGVLVTDDEQRENEGDLIFAAQSLTREQVAMLIRECSGIVCLCLTDEAVRRLDLPLMVSDNSSRYQTAFTVSIEAAEGVTTGVSAADRLTTIRAAIADDAGPLCLSRPGHVFPLRARPGGVLERRGHTEATVDLMRLAGLKPCGVLCELTNPDGSMARMPEIVAFSRKHGFPLITVEELVQYRIVREQPAALLQAEAESAGALCSA.

D-ribulose 5-phosphate contacts are provided by residues 39–40, D44, 152–156, and E176; these read RE and RRGHT. Residue E40 coordinates Mg(2+). H155 contacts Mg(2+).

The protein belongs to the DHBP synthase family. Homodimer. The cofactor is Mg(2+). Mn(2+) is required as a cofactor.

It catalyses the reaction D-ribulose 5-phosphate = (2S)-2-hydroxy-3-oxobutyl phosphate + formate + H(+). It functions in the pathway cofactor biosynthesis; riboflavin biosynthesis; 2-hydroxy-3-oxobutyl phosphate from D-ribulose 5-phosphate: step 1/1. In terms of biological role, catalyzes the conversion of D-ribulose 5-phosphate to formate and 3,4-dihydroxy-2-butanone 4-phosphate. The sequence is that of 3,4-dihydroxy-2-butanone 4-phosphate synthase from Pelobacter propionicus (strain DSM 2379 / NBRC 103807 / OttBd1).